A 260-amino-acid chain; its full sequence is Ribonuclease PH (260 aa).

Phosphate contacts are provided by residues Arg-88 and 126-128; that span reads GTR.

It belongs to the RNase PH family. In terms of assembly, homohexameric ring arranged as a trimer of dimers.

It carries out the reaction tRNA(n+1) + phosphate = tRNA(n) + a ribonucleoside 5'-diphosphate. Phosphorolytic 3'-5' exoribonuclease that plays an important role in tRNA 3'-end maturation. Removes nucleotide residues following the 3'-CCA terminus of tRNAs; can also add nucleotides to the ends of RNA molecules by using nucleoside diphosphates as substrates, but this may not be physiologically important. Probably plays a role in initiation of 16S rRNA degradation (leading to ribosome degradation) during starvation. The sequence is that of Ribonuclease PH from Mycobacterium sp. (strain JLS).